The chain runs to 434 residues: Na(+)/H(+) antiporter NhaA 1 (434 aa).

10 helical membrane-spanning segments follow: residues 30–50 (TGGLLLLVFTVIALVWANVAG), 70–90 (LSIEHWAADGLLAIFFFVTGL), 108–128 (ALPIAAAVGGMAVPALLFVLV), 141–161 (VGWATPTATDIAFALGILAVV), 172–192 (FLLTLAVVDDLLGITVIAIFY), 195–215 (QVHWTPLLLALLTLAAFTVAV), 286–306 (FAVPVFALFSAGVAIGGVSGF), 318–338 (VIAGLVLGKPIGIVGTTWLLA), 354–374 (VLGMAMLAGMGFTVSLLIGSL), and 386–406 (VTLGVLVGSLLSAVLAAVVLS).

This sequence belongs to the NhaA Na(+)/H(+) (TC 2.A.33) antiporter family.

It is found in the cell membrane. It carries out the reaction Na(+)(in) + 2 H(+)(out) = Na(+)(out) + 2 H(+)(in). Functionally, na(+)/H(+) antiporter that extrudes sodium in exchange for external protons. The polypeptide is Na(+)/H(+) antiporter NhaA 1 (Kineococcus radiotolerans (strain ATCC BAA-149 / DSM 14245 / SRS30216)).